Reading from the N-terminus, the 510-residue chain is NAD(P)H-quinone oxidoreductase subunit 2 B, chloroplastic (510 aa).

Helical transmembrane passes span 24-44 (LLLFDGSLIFPECILIFGLIL), 57-77 (LPWFYFISSTSLVMSITALLF), 99-119 (IFQFLILLCSTLCIPLSVEYI), 124-144 (MAITEFLLFVLTATLGGMFLC), 149-169 (LITIFVAPECFSFCSYLLSGY), 183-203 (YLLMGGASSSILVHAFSWLYG), 227-247 (PGISIALLFITVGIGFKLSPA), 295-315 (WHLLLEILAILSMILGNIIAI), 323-343 (MLAYSSIGQIGYVIIGIIVGD), 354-374 (YMLFYISMNLGTFACIVLFGL), 395-415 (ALSLALCLLSLGGLPPLAGFF), 428-448 (GLYSLVLIGLLTSVVSIYYYL), and 484-504 (MIVCVIASTIPGISMNPIIAI).

It belongs to the complex I subunit 2 family. In terms of assembly, NDH is composed of at least 16 different subunits, 5 of which are encoded in the nucleus.

It is found in the plastid. Its subcellular location is the chloroplast thylakoid membrane. The catalysed reaction is a plastoquinone + NADH + (n+1) H(+)(in) = a plastoquinol + NAD(+) + n H(+)(out). The enzyme catalyses a plastoquinone + NADPH + (n+1) H(+)(in) = a plastoquinol + NADP(+) + n H(+)(out). Its function is as follows. NDH shuttles electrons from NAD(P)H:plastoquinone, via FMN and iron-sulfur (Fe-S) centers, to quinones in the photosynthetic chain and possibly in a chloroplast respiratory chain. The immediate electron acceptor for the enzyme in this species is believed to be plastoquinone. Couples the redox reaction to proton translocation, and thus conserves the redox energy in a proton gradient. The protein is NAD(P)H-quinone oxidoreductase subunit 2 B, chloroplastic of Jasminum nudiflorum (Winter jasmine).